Consider the following 357-residue polypeptide: DNA integrity scanning protein DisA (357 aa).

Positions 9–147 (DRKLLEILKT…DDIKYILRDS (139 aa)) constitute a DAC domain. Residues Gly-76, Leu-94, and 107–111 (TRHRT) each bind ATP.

Belongs to the DisA family. In terms of assembly, homooctamer. Mg(2+) is required as a cofactor.

The enzyme catalyses 2 ATP = 3',3'-c-di-AMP + 2 diphosphate. In terms of biological role, participates in a DNA-damage check-point that is active prior to asymmetric division when DNA is damaged. DisA forms globular foci that rapidly scan along the chromosomes during sporulation, searching for lesions. When a lesion is present, DisA pauses at the lesion site. This triggers a cellular response that culminates in a temporary block in sporulation initiation. Functionally, also has diadenylate cyclase activity, catalyzing the condensation of 2 ATP molecules into cyclic di-AMP (c-di-AMP). c-di-AMP acts as a signaling molecule that couples DNA integrity with progression of sporulation. The rise in c-di-AMP level generated by DisA while scanning the chromosome, operates as a positive signal that advances sporulation; upon encountering a lesion, the DisA focus arrests at the damaged site and halts c-di-AMP synthesis. This is DNA integrity scanning protein DisA from Clostridium acetobutylicum (strain ATCC 824 / DSM 792 / JCM 1419 / IAM 19013 / LMG 5710 / NBRC 13948 / NRRL B-527 / VKM B-1787 / 2291 / W).